The primary structure comprises 315 residues: Porphobilinogen deaminase (315 aa).

S-(dipyrrolylmethanemethyl)cysteine is present on C241.

The protein belongs to the HMBS family. Monomer. The cofactor is dipyrromethane.

It carries out the reaction 4 porphobilinogen + H2O = hydroxymethylbilane + 4 NH4(+). Its pathway is porphyrin-containing compound metabolism; protoporphyrin-IX biosynthesis; coproporphyrinogen-III from 5-aminolevulinate: step 2/4. In terms of biological role, tetrapolymerization of the monopyrrole PBG into the hydroxymethylbilane pre-uroporphyrinogen in several discrete steps. This Nitratidesulfovibrio vulgaris (strain DP4) (Desulfovibrio vulgaris) protein is Porphobilinogen deaminase.